We begin with the raw amino-acid sequence, 442 residues long: Probable glycine dehydrogenase (decarboxylating) subunit 1 (442 aa).

Belongs to the GcvP family. N-terminal subunit subfamily. As to quaternary structure, the glycine cleavage system is composed of four proteins: P, T, L and H. In this organism, the P 'protein' is a heterodimer of two subunits.

The enzyme catalyses N(6)-[(R)-lipoyl]-L-lysyl-[glycine-cleavage complex H protein] + glycine + H(+) = N(6)-[(R)-S(8)-aminomethyldihydrolipoyl]-L-lysyl-[glycine-cleavage complex H protein] + CO2. In terms of biological role, the glycine cleavage system catalyzes the degradation of glycine. The P protein binds the alpha-amino group of glycine through its pyridoxal phosphate cofactor; CO(2) is released and the remaining methylamine moiety is then transferred to the lipoamide cofactor of the H protein. In Phenylobacterium zucineum (strain HLK1), this protein is Probable glycine dehydrogenase (decarboxylating) subunit 1.